Here is a 348-residue protein sequence, read N- to C-terminus: Probable dual-specificity RNA methyltransferase RlmN (348 aa).

The Proton acceptor role is filled by Glu93. In terms of domain architecture, Radical SAM core spans 99–333; it reads TEKRLTACLS…VSLRKSRGSD (235 aa). The cysteines at positions 106 and 338 are disulfide-linked. Cys113, Cys117, and Cys120 together coordinate [4Fe-4S] cluster. S-adenosyl-L-methionine-binding positions include 160-161, Ser190, 219-221, and Asn295; these read GE and SLH. The active-site S-methylcysteine intermediate is the Cys338.

The protein belongs to the radical SAM superfamily. RlmN family. The cofactor is [4Fe-4S] cluster.

It localises to the cytoplasm. The enzyme catalyses adenosine(2503) in 23S rRNA + 2 reduced [2Fe-2S]-[ferredoxin] + 2 S-adenosyl-L-methionine = 2-methyladenosine(2503) in 23S rRNA + 5'-deoxyadenosine + L-methionine + 2 oxidized [2Fe-2S]-[ferredoxin] + S-adenosyl-L-homocysteine. It catalyses the reaction adenosine(37) in tRNA + 2 reduced [2Fe-2S]-[ferredoxin] + 2 S-adenosyl-L-methionine = 2-methyladenosine(37) in tRNA + 5'-deoxyadenosine + L-methionine + 2 oxidized [2Fe-2S]-[ferredoxin] + S-adenosyl-L-homocysteine. Specifically methylates position 2 of adenine 2503 in 23S rRNA and position 2 of adenine 37 in tRNAs. This chain is Probable dual-specificity RNA methyltransferase RlmN, found in Prochlorococcus marinus (strain MIT 9515).